A 290-amino-acid chain; its full sequence is Enoyl-CoA hydratase, mitochondrial (290 aa).

The N-terminal 27 residues, methionine 1–phenylalanine 27, are a transit peptide targeting the mitochondrion. Threonine 46 carries the post-translational modification Phosphothreonine. Substrate is bound at residue alanine 98–lysine 101. Lysine 101 is subject to N6-acetyllysine; alternate. An N6-succinyllysine; alternate modification is found at lysine 101. Serine 114 carries the phosphoserine modification. Lysine 115 bears the N6-acetyllysine; alternate mark. Lysine 115 is subject to N6-succinyllysine; alternate. Lysine 118 bears the N6-acetyllysine mark. Substrate is bound at residue glycine 141. Residue lysine 204 is modified to N6-succinyllysine. Lysine 211 carries the N6-acetyllysine modification.

Belongs to the enoyl-CoA hydratase/isomerase family. In terms of assembly, homohexamer; dimer of trimers. Liver, fibroblast, muscle. Barely detectable in spleen and kidney.

The protein resides in the mitochondrion matrix. The enzyme catalyses a (3S)-3-hydroxyacyl-CoA = a (2E)-enoyl-CoA + H2O. It carries out the reaction a (3E)-enoyl-CoA = a 4-saturated (2E)-enoyl-CoA. It catalyses the reaction (3E)-hexenoyl-CoA = (2E)-hexenoyl-CoA. The catalysed reaction is (3S)-3-hydroxybutanoyl-CoA = (2E)-butenoyl-CoA + H2O. The enzyme catalyses 3-hydroxyisovaleryl-CoA = 3-methylbut-2-enoyl-CoA + H2O. It carries out the reaction 3-hydroxypropanoyl-CoA = acryloyl-CoA + H2O. It catalyses the reaction 3-hydroxybutanoyl-CoA = (2E)-butenoyl-CoA + H2O. The catalysed reaction is 2-methylpropenoyl-CoA + H2O = (S)-3-hydroxyisobutanoyl-CoA. The enzyme catalyses (3S)-hydroxyhexanoyl-CoA = (2E)-hexenoyl-CoA + H2O. It carries out the reaction (3S)-hydroxydecanoyl-CoA = (2E)-decenoyl-CoA + H2O. The protein operates within lipid metabolism; fatty acid beta-oxidation. Converts unsaturated trans-2-enoyl-CoA species ((2E)-enoyl-CoA) to the corresponding (3S)-3hydroxyacyl-CoA species through addition of a water molecule to the double bond. Catalyzes the hydration of medium- and short-chained fatty enoyl-CoA thioesters from 4 carbons long (C4) up to C16. Has high substrate specificity for crotonyl-CoA ((2E)-butenoyl-CoA) and moderate specificity for acryloyl-CoA, 3-methylcrotonyl-CoA (3-methyl-(2E)-butenoyl-CoA) and methacrylyl-CoA ((2E)-2-methylpropenoyl-CoA). Can bind tiglyl-CoA (2-methylcrotonoyl-CoA), but hydrates only a small amount of this substrate. Plays a key role in the beta-oxidation spiral of short- and medium-chain fatty acid oxidation. At a lower rate than the hydratase reaction, catalyzes the isomerase reaction of trans-3-enoyl-CoA species (such as (3E)-hexenoyl-CoA) to trans-2-enoyl-CoA species (such as (2E)-hexenoyl-CoA), which are subsequently hydrated to 3(S)-3-hydroxyacyl-CoA species (such as (3S)-hydroxyhexanoyl-CoA). The polypeptide is Enoyl-CoA hydratase, mitochondrial (Homo sapiens (Human)).